Here is a 469-residue protein sequence, read N- to C-terminus: Chromosomal replication initiator protein DnaA (469 aa).

The tract at residues 1-83 (MSEWDYKIFW…KKISIDFIIK (83 aa)) is domain I, interacts with DnaA modulators. The tract at residues 83-128 (KPNTSEDLSKAENEGGNDKKEDAAKPSSAESKKKSVKTEGGRGQHP) is domain II. Positions 89-131 (DLSKAENEGGNDKKEDAAKPSSAESKKKSVKTEGGRGQHPDLR) are disordered. Residues 129–344 (DLRPEYNFED…AALTKLIAYT (216 aa)) are domain III, AAA+ region. Gly173, Gly175, Lys176, and Thr177 together coordinate ATP. The segment at 345-469 (ELTKKTMDEA…RNTIKENTNK (125 aa)) is domain IV, binds dsDNA.

The protein belongs to the DnaA family. In terms of assembly, oligomerizes as a right-handed, spiral filament on DNA at oriC.

The protein resides in the cytoplasm. Functionally, plays an essential role in the initiation and regulation of chromosomal replication. ATP-DnaA binds to the origin of replication (oriC) to initiate formation of the DNA replication initiation complex once per cell cycle. Binds the DnaA box (a 9 base pair repeat at the origin) and separates the double-stranded (ds)DNA. Forms a right-handed helical filament on oriC DNA; dsDNA binds to the exterior of the filament while single-stranded (ss)DNA is stabiized in the filament's interior. The ATP-DnaA-oriC complex binds and stabilizes one strand of the AT-rich DNA unwinding element (DUE), permitting loading of DNA polymerase. After initiation quickly degrades to an ADP-DnaA complex that is not apt for DNA replication. Binds acidic phospholipids. This Treponema denticola (strain ATCC 35405 / DSM 14222 / CIP 103919 / JCM 8153 / KCTC 15104) protein is Chromosomal replication initiator protein DnaA.